A 105-amino-acid polypeptide reads, in one-letter code: Protein LBH (105 aa).

The 87-residue stretch at 18 to 104 (MTEVMMNTQP…CEETAKENKE (87 aa)) folds into the LBH domain. Position 63 is a phosphoserine (Ser63). The span at 86–96 (LVQEDEQDNCE) shows a compositional bias: acidic residues. The disordered stretch occupies residues 86 to 105 (LVQEDEQDNCEETAKENKEQ).

This sequence belongs to the LBH family. Highly expressed in heart, and expressed at low levels in placenta, lung, skeletal muscle, kidney and liver.

It localises to the nucleus. Its subcellular location is the cytoplasm. Its function is as follows. Transcriptional activator which may act in mitogen-activated protein kinase signaling pathway. This is Protein LBH from Homo sapiens (Human).